The chain runs to 311 residues: tRNA dimethylallyltransferase (311 aa).

12–19 (GPTASGKT) is an ATP binding site. 14–19 (TASGKT) lines the substrate pocket. Interaction with substrate tRNA stretches follow at residues 37–40 (DSAL), 161–165 (QRINR), and 241–246 (RCVGYR).

It belongs to the IPP transferase family. Monomer. Requires Mg(2+) as cofactor.

It carries out the reaction adenosine(37) in tRNA + dimethylallyl diphosphate = N(6)-dimethylallyladenosine(37) in tRNA + diphosphate. Catalyzes the transfer of a dimethylallyl group onto the adenine at position 37 in tRNAs that read codons beginning with uridine, leading to the formation of N6-(dimethylallyl)adenosine (i(6)A). The polypeptide is tRNA dimethylallyltransferase (Histophilus somni (strain 129Pt) (Haemophilus somnus)).